We begin with the raw amino-acid sequence, 236 residues long: Eukaryotic translation initiation factor 3 subunit J (236 aa).

The tract at residues 1 to 86 (MADDWESAAD…KEEEEQKRLA (86 aa)) is disordered. A compositionally biased stretch (acidic residues) spans 28–46 (GEDDDEDVKESWEDEEEKK). Composition is skewed to basic and acidic residues over residues 47 to 58 (DEEKPTKTEAPV) and 68 to 86 (AKLE…KRLA). Positions 61–115 (KPNKALKAKLEEQERLKEEEEQKRLAEMTPEEKLAEKLRLQKIQEESDLKSALET) form a coiled coil.

It belongs to the eIF-3 subunit J family. In terms of assembly, component of the eukaryotic translation initiation factor 3 (eIF-3) complex. The eIF-3 complex interacts with pix.

Its subcellular location is the cytoplasm. In terms of biological role, component of the eukaryotic translation initiation factor 3 (eIF-3) complex, which is involved in protein synthesis of a specialized repertoire of mRNAs and, together with other initiation factors, stimulates binding of mRNA and methionyl-tRNAi to the 40S ribosome. The eIF-3 complex specifically targets and initiates translation of a subset of mRNAs involved in cell proliferation. The protein is Eukaryotic translation initiation factor 3 subunit J of Drosophila mojavensis (Fruit fly).